Here is a 148-residue protein sequence, read N- to C-terminus: MGKSTFLQDFKAFAMKGNVIDMAVGVVIGGAFGKIVSSLVANVIMPPIGLLVGGVNFTDLKWVMKAAEVGADGKEIAPAVSLDYGQFLQATFDFLIIAFAIFLFIRLITKLTTKKAAEEAPAAPPAPPAPTKEEVLLTEIRDLLKEKK.

The next 2 helical transmembrane spans lie at 12–32 and 85–105; these read AFAMKGNVIDMAVGVVIGGAF and GQFLQATFDFLIIAFAIFLFI.

The protein belongs to the MscL family. In terms of assembly, homopentamer.

It is found in the cell inner membrane. In terms of biological role, channel that opens in response to stretch forces in the membrane lipid bilayer. May participate in the regulation of osmotic pressure changes within the cell. The sequence is that of Large-conductance mechanosensitive channel from Bacteroides thetaiotaomicron (strain ATCC 29148 / DSM 2079 / JCM 5827 / CCUG 10774 / NCTC 10582 / VPI-5482 / E50).